The following is a 236-amino-acid chain: Leucyl/phenylalanyl-tRNA--protein transferase (236 aa).

The protein belongs to the L/F-transferase family.

It is found in the cytoplasm. It catalyses the reaction N-terminal L-lysyl-[protein] + L-leucyl-tRNA(Leu) = N-terminal L-leucyl-L-lysyl-[protein] + tRNA(Leu) + H(+). The catalysed reaction is N-terminal L-arginyl-[protein] + L-leucyl-tRNA(Leu) = N-terminal L-leucyl-L-arginyl-[protein] + tRNA(Leu) + H(+). The enzyme catalyses L-phenylalanyl-tRNA(Phe) + an N-terminal L-alpha-aminoacyl-[protein] = an N-terminal L-phenylalanyl-L-alpha-aminoacyl-[protein] + tRNA(Phe). Its function is as follows. Functions in the N-end rule pathway of protein degradation where it conjugates Leu, Phe and, less efficiently, Met from aminoacyl-tRNAs to the N-termini of proteins containing an N-terminal arginine or lysine. The protein is Leucyl/phenylalanyl-tRNA--protein transferase of Shewanella sediminis (strain HAW-EB3).